Reading from the N-terminus, the 100-residue chain is Aspartyl/glutamyl-tRNA(Asn/Gln) amidotransferase subunit C (100 aa).

It belongs to the GatC family. As to quaternary structure, heterotrimer of A, B and C subunits.

It catalyses the reaction L-glutamyl-tRNA(Gln) + L-glutamine + ATP + H2O = L-glutaminyl-tRNA(Gln) + L-glutamate + ADP + phosphate + H(+). The enzyme catalyses L-aspartyl-tRNA(Asn) + L-glutamine + ATP + H2O = L-asparaginyl-tRNA(Asn) + L-glutamate + ADP + phosphate + 2 H(+). In terms of biological role, allows the formation of correctly charged Asn-tRNA(Asn) or Gln-tRNA(Gln) through the transamidation of misacylated Asp-tRNA(Asn) or Glu-tRNA(Gln) in organisms which lack either or both of asparaginyl-tRNA or glutaminyl-tRNA synthetases. The reaction takes place in the presence of glutamine and ATP through an activated phospho-Asp-tRNA(Asn) or phospho-Glu-tRNA(Gln). This chain is Aspartyl/glutamyl-tRNA(Asn/Gln) amidotransferase subunit C, found in Staphylococcus aureus (strain Newman).